Here is a 299-residue protein sequence, read N- to C-terminus: Probable lipid kinase YegS (299 aa).

The 132-residue stretch at 2–133 (ANFPASLLIL…IDMARVNDKT (132 aa)) folds into the DAGKc domain. Residues T40, 66–72 (GDGTINE), and T95 each bind ATP. Mg(2+)-binding residues include L215, D218, and L220. Residue E271 is the Proton acceptor of the active site.

Belongs to the diacylglycerol/lipid kinase family. YegS lipid kinase subfamily. Requires Mg(2+) as cofactor. The cofactor is Ca(2+).

It is found in the cytoplasm. Functionally, probably phosphorylates lipids; the in vivo substrate is unknown. The protein is Probable lipid kinase YegS of Salmonella newport (strain SL254).